A 63-amino-acid polypeptide reads, in one-letter code: Large ribosomal subunit protein bL28 (63 aa).

It belongs to the bacterial ribosomal protein bL28 family.

The chain is Large ribosomal subunit protein bL28 from Alkaliphilus metalliredigens (strain QYMF).